Reading from the N-terminus, the 49-residue chain is Large ribosomal subunit protein bL33 (49 aa).

It belongs to the bacterial ribosomal protein bL33 family.

The sequence is that of Large ribosomal subunit protein bL33 from Clostridioides difficile (strain 630) (Peptoclostridium difficile).